A 311-amino-acid chain; its full sequence is Porphobilinogen deaminase (311 aa).

Cys-242 is modified (S-(dipyrrolylmethanemethyl)cysteine).

Belongs to the HMBS family. As to quaternary structure, monomer. It depends on dipyrromethane as a cofactor.

The enzyme catalyses 4 porphobilinogen + H2O = hydroxymethylbilane + 4 NH4(+). It participates in porphyrin-containing compound metabolism; protoporphyrin-IX biosynthesis; coproporphyrinogen-III from 5-aminolevulinate: step 2/4. Its function is as follows. Tetrapolymerization of the monopyrrole PBG into the hydroxymethylbilane pre-uroporphyrinogen in several discrete steps. This chain is Porphobilinogen deaminase (hemC), found in Neisseria meningitidis serogroup A / serotype 4A (strain DSM 15465 / Z2491).